Here is a 125-residue protein sequence, read N- to C-terminus: PCNA-associated factor (125 aa).

The segment at 1–125 is disordered; it reads MVRTKADSAG…SEEAADSDDE (125 aa). Residues 8–17 are compositionally biased toward low complexity; it reads SAGSSASSGS. The short motif at 28–39 is the D-box element; that stretch reads RKTFGSSSSGSN. A PIP-box motif is present at residues 68–79; sequence QKGIGEFFGSPS. Residues 85-87 carry the KEN box motif; that stretch reads KEN. An Initiation motif motif is present at residues 95–107; that stretch reads EAGGSGAGKAPRK. Acidic residues predominate over residues 115–125; it reads PSEEAADSDDE.

As to quaternary structure, interacts with pcna.

It is found in the nucleus. Its subcellular location is the cytoplasm. The protein localises to the perinuclear region. Functionally, PCNA-binding protein that acts as a regulator of DNA repair during DNA replication. Following DNA damage, the interaction with pcna is disrupted, facilitating the interaction between monoubiquitinated pcna and the translesion DNA synthesis DNA polymerase eta (polh) at stalled replisomes, facilitating the bypass of replication-fork-blocking lesions. Also acts as a regulator of centrosome number. The polypeptide is PCNA-associated factor (Xenopus tropicalis (Western clawed frog)).